Here is an 851-residue protein sequence, read N- to C-terminus: UPF0508 protein CAGL0M08074g (851 aa).

Belongs to the UPF0508 family.

This is UPF0508 protein CAGL0M08074g from Candida glabrata (strain ATCC 2001 / BCRC 20586 / JCM 3761 / NBRC 0622 / NRRL Y-65 / CBS 138) (Yeast).